A 397-amino-acid polypeptide reads, in one-letter code: Digeranylgeranylglycerophospholipid reductase 1 (397 aa).

The FAD site is built by Ala-18, Asp-37, Cys-48, Ala-49, Gly-51, Arg-104, Ala-128, Asp-284, Gly-296, and Ile-297.

The protein belongs to the geranylgeranyl reductase family. DGGGPL reductase subfamily. Requires FAD as cofactor.

It carries out the reaction a 2,3-bis-O-phytanyl-sn-glycerol 1-phospholipid + 8 A = a 2,3-bis-O-(geranylgeranyl)-sn-glycerol 1-phospholipid + 8 AH2. The enzyme catalyses 2,3-bis-O-(phytanyl)-sn-glycerol 1-phosphate + 8 A = 2,3-bis-O-(geranylgeranyl)-sn-glycerol 1-phosphate + 8 AH2. The catalysed reaction is CDP-2,3-bis-O-(geranylgeranyl)-sn-glycerol + 8 AH2 = CDP-2,3-bis-O-(phytanyl)-sn-glycerol + 8 A. It catalyses the reaction archaetidylserine + 8 AH2 = 2,3-bis-O-phytanyl-sn-glycero-3-phospho-L-serine + 8 A. It participates in membrane lipid metabolism; glycerophospholipid metabolism. Is involved in the reduction of 2,3-digeranylgeranylglycerophospholipids (unsaturated archaeols) into 2,3-diphytanylglycerophospholipids (saturated archaeols) in the biosynthesis of archaeal membrane lipids. Catalyzes the formation of archaetidic acid (2,3-di-O-phytanyl-sn-glyceryl phosphate) from 2,3-di-O-geranylgeranylglyceryl phosphate (DGGGP) via the hydrogenation of each double bond of the isoprenoid chains. Is also probably able to reduce double bonds of geranyl groups in CDP-2,3-bis-O-(geranylgeranyl)-sn-glycerol and archaetidylserine, thus acting at various stages in the biosynthesis of archaeal membrane lipids. This Methanothermobacter thermautotrophicus (strain ATCC 29096 / DSM 1053 / JCM 10044 / NBRC 100330 / Delta H) (Methanobacterium thermoautotrophicum) protein is Digeranylgeranylglycerophospholipid reductase 1.